Here is a 494-residue protein sequence, read N- to C-terminus: Sugiol synthase (494 aa).

A helical transmembrane segment spans residues serine 3–arginine 23. Cysteine 437 provides a ligand contact to heme.

It belongs to the cytochrome P450 family. It depends on heme as a cofactor. As to expression, expressed in roots.

It localises to the membrane. It catalyses the reaction ferruginol + 2 reduced [NADPH--hemoprotein reductase] + 2 O2 = sugiol + 2 oxidized [NADPH--hemoprotein reductase] + 3 H2O + 2 H(+). The enzyme catalyses ferruginol + reduced [NADPH--hemoprotein reductase] + O2 = 11-hydroxyferruginol + oxidized [NADPH--hemoprotein reductase] + H2O + H(+). The catalysed reaction is 11-hydroxyferruginol + 2 reduced [NADPH--hemoprotein reductase] + 2 O2 = 11-hydroxysugiol + 2 oxidized [NADPH--hemoprotein reductase] + 3 H2O + 2 H(+). It functions in the pathway secondary metabolite biosynthesis; terpenoid biosynthesis. Functionally, monooxygenase that oxidizes ferruginol to produce sugiol. Oxidizes ferruginol at C-12 to produce 11-hydroxyferruginol. Can oxidize 11-hydroxyferruginol to 11-hydroxysugiol. These products are intermediates in tanshinone biosynthesis. In Salvia miltiorrhiza (Chinese sage), this protein is Sugiol synthase.